The following is a 106-amino-acid chain: SH3 domain-binding glutamic acid-rich-like protein 2-A (106 aa).

Positions 61-67 (QGNPLPP) match the SH3-binding motif.

This sequence belongs to the SH3BGR family.

It localises to the nucleus. This chain is SH3 domain-binding glutamic acid-rich-like protein 2-A (sh3bgrl2-a), found in Xenopus laevis (African clawed frog).